Here is a 159-residue protein sequence, read N- to C-terminus: Phosphopantetheine adenylyltransferase (159 aa).

Ser9 contributes to the substrate binding site. Residues 9 to 10 (SF) and His17 contribute to the ATP site. 3 residues coordinate substrate: Lys41, Leu73, and Lys87. ATP is bound by residues 88–90 (GLR), Glu98, and 123–129 (YSYLSSS).

Belongs to the bacterial CoaD family. In terms of assembly, homohexamer. The cofactor is Mg(2+).

The protein resides in the cytoplasm. It catalyses the reaction (R)-4'-phosphopantetheine + ATP + H(+) = 3'-dephospho-CoA + diphosphate. The protein operates within cofactor biosynthesis; coenzyme A biosynthesis; CoA from (R)-pantothenate: step 4/5. Functionally, reversibly transfers an adenylyl group from ATP to 4'-phosphopantetheine, yielding dephospho-CoA (dPCoA) and pyrophosphate. The protein is Phosphopantetheine adenylyltransferase of Clostridium botulinum (strain Eklund 17B / Type B).